A 626-amino-acid chain; its full sequence is DNA primase (626 aa).

Residues Cys-39–Cys-63 form a CHC2-type zinc finger. Positions Glu-264–Gly-346 constitute a Toprim domain. The Mg(2+) site is built by Glu-270, Asp-314, and Asp-316.

This sequence belongs to the DnaG primase family. Monomer. Interacts with DnaB. It depends on Zn(2+) as a cofactor. Mg(2+) serves as cofactor.

It catalyses the reaction ssDNA + n NTP = ssDNA/pppN(pN)n-1 hybrid + (n-1) diphosphate.. RNA polymerase that catalyzes the synthesis of short RNA molecules used as primers for DNA polymerase during DNA replication. The protein is DNA primase of Listeria monocytogenes serovar 1/2a (strain ATCC BAA-679 / EGD-e).